Consider the following 105-residue polypeptide: DNA-directed RNA polymerase subunit omega (105 aa).

The protein belongs to the RNA polymerase subunit omega family. In terms of assembly, the RNAP catalytic core consists of 2 alpha, 1 beta, 1 beta' and 1 omega subunit. When a sigma factor is associated with the core the holoenzyme is formed, which can initiate transcription.

It catalyses the reaction RNA(n) + a ribonucleoside 5'-triphosphate = RNA(n+1) + diphosphate. In terms of biological role, promotes RNA polymerase assembly. Latches the N- and C-terminal regions of the beta' subunit thereby facilitating its interaction with the beta and alpha subunits. In Streptococcus pyogenes serotype M12 (strain MGAS2096), this protein is DNA-directed RNA polymerase subunit omega.